The sequence spans 156 residues: MSKLLNKVFNFVGWEAVDEDEYEYDEQELNTKEEVKDEPIQTHFFNGSKKQQSGKVVNIHTGNQFKMIVSQPNTFDDAQDICDHLKNKKPVVINLEGIEKQDAQRIIDFLSGSVYALDGSIQKVSCDIFVIAPNNVDVSGDLKDELRNKTVFPWAK.

This sequence belongs to the SepF family. In terms of assembly, homodimer. Interacts with FtsZ.

It is found in the cytoplasm. Its function is as follows. Cell division protein that is part of the divisome complex and is recruited early to the Z-ring. Probably stimulates Z-ring formation, perhaps through the cross-linking of FtsZ protofilaments. Its function overlaps with FtsA. This chain is Cell division protein SepF, found in Ruminiclostridium cellulolyticum (strain ATCC 35319 / DSM 5812 / JCM 6584 / H10) (Clostridium cellulolyticum).